The primary structure comprises 500 residues: UDP-N-acetylmuramoylalanine--D-glutamate ligase (500 aa).

111–117 contacts ATP; that stretch reads GTNGKST. Positions 260–306 constitute an RPE3 insert domain; that stretch reads DISFELQHNSESFRQDEFQGEPAEPECIKIREHRQDLQNSLVSSFMH.

The protein belongs to the MurCDEF family.

Its subcellular location is the cytoplasm. It carries out the reaction UDP-N-acetyl-alpha-D-muramoyl-L-alanine + D-glutamate + ATP = UDP-N-acetyl-alpha-D-muramoyl-L-alanyl-D-glutamate + ADP + phosphate + H(+). The protein operates within cell wall biogenesis; peptidoglycan biosynthesis. Functionally, cell wall formation. Catalyzes the addition of glutamate to the nucleotide precursor UDP-N-acetylmuramoyl-L-alanine (UMA). This Rickettsia conorii (strain ATCC VR-613 / Malish 7) protein is UDP-N-acetylmuramoylalanine--D-glutamate ligase (murD).